The primary structure comprises 128 residues: Glycine cleavage system H protein (128 aa).

The 83-residue stretch at 25 to 107 (TITVGITHHA…YGAGWFFKIK (83 aa)) folds into the Lipoyl-binding domain. At K66 the chain carries N6-lipoyllysine.

It belongs to the GcvH family. As to quaternary structure, the glycine cleavage system is composed of four proteins: P, T, L and H. (R)-lipoate serves as cofactor.

In terms of biological role, the glycine cleavage system catalyzes the degradation of glycine. The H protein shuttles the methylamine group of glycine from the P protein to the T protein. This chain is Glycine cleavage system H protein, found in Neisseria meningitidis serogroup C (strain 053442).